The chain runs to 426 residues: Adenylosuccinate synthetase (426 aa).

Residues 12-18 (GDEGKGK) and 40-42 (GHT) contribute to the GTP site. D13 acts as the Proton acceptor in catalysis. Residues D13 and G40 each contribute to the Mg(2+) site. IMP is bound by residues 13–16 (DEGK), 38–41 (NAGH), T131, R145, Q226, T241, and R305. H41 functions as the Proton donor in the catalytic mechanism. 301–307 (ATTGRKR) contributes to the substrate binding site. GTP contacts are provided by residues R307, 333–335 (KLD), and 415–417 (SVG).

This sequence belongs to the adenylosuccinate synthetase family. Homodimer. Mg(2+) is required as a cofactor.

It localises to the cytoplasm. The catalysed reaction is IMP + L-aspartate + GTP = N(6)-(1,2-dicarboxyethyl)-AMP + GDP + phosphate + 2 H(+). Its pathway is purine metabolism; AMP biosynthesis via de novo pathway; AMP from IMP: step 1/2. Functionally, plays an important role in the de novo pathway of purine nucleotide biosynthesis. Catalyzes the first committed step in the biosynthesis of AMP from IMP. The protein is Adenylosuccinate synthetase of Nitratidesulfovibrio vulgaris (strain ATCC 29579 / DSM 644 / CCUG 34227 / NCIMB 8303 / VKM B-1760 / Hildenborough) (Desulfovibrio vulgaris).